A 186-amino-acid polypeptide reads, in one-letter code: Putative manganese efflux pump MntP (186 aa).

6 helical membrane-spanning segments follow: residues 3 to 23, 39 to 59, 65 to 85, 109 to 129, 133 to 153, and 166 to 186; these read PIALLLLAFAMSTDAFAAAIG, IGIIFGSIEAITPLVGWLIGK, VEAWDHWIAFSLLTVLGLHMI, CLTAFSTSIDAMAVGVSLAFI, IWIASALIGLATTLMVTIGIM, and AEIFGGLTLIAVGAWILYGQL.

It belongs to the MntP (TC 9.B.29) family.

The protein resides in the cell inner membrane. Probably functions as a manganese efflux pump. This Alcanivorax borkumensis (strain ATCC 700651 / DSM 11573 / NCIMB 13689 / SK2) protein is Putative manganese efflux pump MntP.